The following is a 166-amino-acid chain: Ureidoglycolate lyase (166 aa).

It belongs to the ureidoglycolate lyase family. In terms of assembly, homodimer. Ni(2+) serves as cofactor.

It carries out the reaction (S)-ureidoglycolate = urea + glyoxylate. It functions in the pathway nitrogen metabolism; (S)-allantoin degradation. Its function is as follows. Catalyzes the catabolism of the allantoin degradation intermediate (S)-ureidoglycolate, generating urea and glyoxylate. Involved in the utilization of allantoin as nitrogen source. This is Ureidoglycolate lyase from Rhizobium leguminosarum bv. trifolii (strain WSM2304).